A 669-amino-acid chain; its full sequence is MMPSPSDSSRSLTSRPSTRGLTHLRLHRPWLQALLTLGLAQVLLGILVITFSMVASSVTTTESIKRSCPSWAGFSLAFSGLVGIVSWKRPFTLVISFFSLLSVLCVMLSMAGSVLSCKNAQLARDFRECSMEGKVCVCCPPIPLHRPCPEWGQELKVALNSTCDEARGALKNLLFSVCGLTICAAIICTLSAIVCCVQIFSLDLVHMQLAPERSVSGPLGPLACTSSPPAPLLHTMLDLEEFVPPVPPPPYYPPEYTCSSETDAQSITYNGSMDSPVPLYPTDCPPSYEAVMGLRRDSQATLFDPQLHDGSCVCERVASIVDVSMDSGSLVLSAIGDLPGGSSPSEDSCLLELQGSVRSVDYVLFRSIQRSRAGYCLSLDCGLRGPFEDSPLPRRPPRAARSYSCSAPEAPPPLGAPTAARSCHRLEGWPPWVGPCFPELRRRVPRGGSRSAAPPPARAPARRFSDSSGSLTPPGHRPPHRTPPPPLLLPRSHSDPGITTSSDIADFRDLYTKVLEEEAASVSSADTGLCSEACLFRLARCPSPKLLRARSAEKRRPVPTFQKVPLPSGPTPAHSLGDLKGSWPGRGLVTRFLQLSRRSPDPTGTGAHGYKQVRRSPWGRPGRESLHLRSCGDLSSGSSLRRLLSARRLEHGIRPHSLSLNGGSRETGL.

Helical transmembrane passes span Leu34–Val54, Ser67–Trp87, and Phe91–Ala111. Residue Asn160 is glycosylated (N-linked (GlcNAc...) asparagine). A helical membrane pass occupies residues Leu174 to Val194. Ser359 and Ser390 each carry phosphoserine. 3 disordered regions span residues Phe387–Ala420, Pro445–Ser502, and Arg550–Thr571. Low complexity predominate over residues Ala399–Pro408. The residue at position 494 (Ser494) is a Phosphoserine. The residue at position 575 (Ser575) is a Phosphoserine. The tract at residues Arg597–Glu624 is disordered.

The protein belongs to the ENTREP family. May interact with WWOX.

It is found in the membrane. This chain is Protein ENTREP3, found in Mus musculus (Mouse).